The primary structure comprises 308 residues: Aspartate carbamoyltransferase catalytic subunit (308 aa).

Residues Arg50 and Thr51 each coordinate carbamoyl phosphate. Residue Lys78 participates in L-aspartate binding. The carbamoyl phosphate site is built by Arg100, His131, and Gln134. Residues Arg164 and Arg216 each coordinate L-aspartate. The carbamoyl phosphate site is built by Ala259 and Pro260.

This sequence belongs to the aspartate/ornithine carbamoyltransferase superfamily. ATCase family. In terms of assembly, heterododecamer (2C3:3R2) of six catalytic PyrB chains organized as two trimers (C3), and six regulatory PyrI chains organized as three dimers (R2).

It carries out the reaction carbamoyl phosphate + L-aspartate = N-carbamoyl-L-aspartate + phosphate + H(+). Its pathway is pyrimidine metabolism; UMP biosynthesis via de novo pathway; (S)-dihydroorotate from bicarbonate: step 2/3. Its function is as follows. Catalyzes the condensation of carbamoyl phosphate and aspartate to form carbamoyl aspartate and inorganic phosphate, the committed step in the de novo pyrimidine nucleotide biosynthesis pathway. The polypeptide is Aspartate carbamoyltransferase catalytic subunit (Oenococcus oeni (strain ATCC BAA-331 / PSU-1)).